Reading from the N-terminus, the 148-residue chain is Thiol-disulfide oxidoreductase YkuV (148 aa).

In terms of domain architecture, Thioredoxin spans 2-145; that stretch reads KLRQPMPELT…LEKRVNRVLA (144 aa). Cys-41 and Cys-44 are disulfide-bonded.

As to quaternary structure, monomer.

It is found in the cytoplasm. Its function is as follows. Participates in various redox reactions through the reversible oxidation of its active center dithiol to a disulfide and catalyzes dithiol-disulfide exchange reactions. This Bacillus subtilis (strain 168) protein is Thiol-disulfide oxidoreductase YkuV (ykuV).